A 212-amino-acid chain; its full sequence is Protein HP-25 homolog 1 (212 aa).

The N-terminal stretch at 1-34 (MPGGRRRVGSMNIAGFWILAQFVLLLVANVKSSA) is a signal peptide. Residues 36 to 66 (SELCGPRGARGPPGLSGLPGPPGYTGPIGMP) are disordered. Residues 40–53 (GPRGARGPPGLSGL) show a composition bias toward low complexity. Positions 40–76 (GPRGARGPPGLSGLPGPPGYTGPIGMPGLTGRPGLPG) constitute a Collagen-like domain. The C1q domain maps to 82 to 212 (PPLPQSAFSV…VFYGFLLNGN (131 aa)). N125 carries an N-linked (GlcNAc...) asparagine glycan.

The protein localises to the secreted. The chain is Protein HP-25 homolog 1 from Bos taurus (Bovine).